The chain runs to 439 residues: Tubulin beta chain (439 aa).

The GTP site is built by Gln-11, Glu-69, Ser-138, Gly-142, Thr-143, Gly-144, Asn-204, and Asn-226. Glu-69 is a binding site for Mg(2+).

This sequence belongs to the tubulin family. In terms of assembly, dimer of alpha and beta chains. A typical microtubule is a hollow water-filled tube with an outer diameter of 25 nm and an inner diameter of 15 nM. Alpha-beta heterodimers associate head-to-tail to form protofilaments running lengthwise along the microtubule wall with the beta-tubulin subunit facing the microtubule plus end conferring a structural polarity. Microtubules usually have 13 protofilaments but different protofilament numbers can be found in some organisms and specialized cells. Requires Mg(2+) as cofactor.

The protein localises to the cytoplasm. Its subcellular location is the cytoskeleton. In terms of biological role, tubulin is the major constituent of microtubules, a cylinder consisting of laterally associated linear protofilaments composed of alpha- and beta-tubulin heterodimers. Microtubules grow by the addition of GTP-tubulin dimers to the microtubule end, where a stabilizing cap forms. Below the cap, tubulin dimers are in GDP-bound state, owing to GTPase activity of alpha-tubulin. This chain is Tubulin beta chain (TUB2), found in Encephalitozoon intestinalis (Microsporidian parasite).